We begin with the raw amino-acid sequence, 72 residues long: Translation initiation factor IF-1 (72 aa).

One can recognise an S1-like domain in the interval Met1–Lys72.

This sequence belongs to the IF-1 family. In terms of assembly, component of the 30S ribosomal translation pre-initiation complex which assembles on the 30S ribosome in the order IF-2 and IF-3, IF-1 and N-formylmethionyl-tRNA(fMet); mRNA recruitment can occur at any time during PIC assembly.

Its subcellular location is the cytoplasm. Functionally, one of the essential components for the initiation of protein synthesis. Stabilizes the binding of IF-2 and IF-3 on the 30S subunit to which N-formylmethionyl-tRNA(fMet) subsequently binds. Helps modulate mRNA selection, yielding the 30S pre-initiation complex (PIC). Upon addition of the 50S ribosomal subunit IF-1, IF-2 and IF-3 are released leaving the mature 70S translation initiation complex. The polypeptide is Translation initiation factor IF-1 (Campylobacter jejuni subsp. doylei (strain ATCC BAA-1458 / RM4099 / 269.97)).